A 760-amino-acid polypeptide reads, in one-letter code: 5-methyltetrahydropteroyltriglutamate--homocysteine methyltransferase (760 aa).

5-methyltetrahydropteroyltri-L-glutamate-binding positions include 17–20 and Lys-118; that span reads RELK. L-homocysteine is bound by residues 436-438 and Glu-489; that span reads IGS. Residues 436–438 and Glu-489 each bind L-methionine; that span reads IGS. Residues 520–521 and Trp-566 contribute to the 5-methyltetrahydropteroyltri-L-glutamate site; that span reads RC. Residue Asp-604 participates in L-homocysteine binding. Residue Asp-604 coordinates L-methionine. Glu-610 serves as a coordination point for 5-methyltetrahydropteroyltri-L-glutamate. 3 residues coordinate Zn(2+): His-646, Cys-648, and Glu-670. The Proton donor role is filled by His-699. Position 731 (Cys-731) interacts with Zn(2+).

It belongs to the vitamin-B12 independent methionine synthase family. The cofactor is Zn(2+).

It carries out the reaction 5-methyltetrahydropteroyltri-L-glutamate + L-homocysteine = tetrahydropteroyltri-L-glutamate + L-methionine. Its pathway is amino-acid biosynthesis; L-methionine biosynthesis via de novo pathway; L-methionine from L-homocysteine (MetE route): step 1/1. Functionally, catalyzes the transfer of a methyl group from 5-methyltetrahydrofolate to homocysteine resulting in methionine formation. The chain is 5-methyltetrahydropteroyltriglutamate--homocysteine methyltransferase from Vibrio harveyi (Beneckea harveyi).